A 239-amino-acid polypeptide reads, in one-letter code: 1-(5-phosphoribosyl)-5-[(5-phosphoribosylamino)methylideneamino] imidazole-4-carboxamide isomerase (239 aa).

D8 functions as the Proton acceptor in the catalytic mechanism. Catalysis depends on D129, which acts as the Proton donor.

The protein belongs to the HisA/HisF family.

The protein localises to the cytoplasm. It carries out the reaction 1-(5-phospho-beta-D-ribosyl)-5-[(5-phospho-beta-D-ribosylamino)methylideneamino]imidazole-4-carboxamide = 5-[(5-phospho-1-deoxy-D-ribulos-1-ylimino)methylamino]-1-(5-phospho-beta-D-ribosyl)imidazole-4-carboxamide. Its pathway is amino-acid biosynthesis; L-histidine biosynthesis; L-histidine from 5-phospho-alpha-D-ribose 1-diphosphate: step 4/9. The protein is 1-(5-phosphoribosyl)-5-[(5-phosphoribosylamino)methylideneamino] imidazole-4-carboxamide isomerase of Bacillus cereus (strain B4264).